The sequence spans 178 residues: MFGIHSLAGVLLLVIVQRQLASPLQEAEDNSSLETTDPLLEDLMGVSNVKRHSEGTFSNDYSKYQEERMAQDFVQWLMNSKRSGAPSKRHADGTYTSDVSTYLQDQAAKDFVSWLKSGRARRESAEESRNGPMSRRHVDGSFTSDVNKVLDSLAAKEYLLWVMTSKTSGKSNKRQEDH.

A signal peptide spans 1-21; sequence MFGIHSLAGVLLLVIVQRQLA. 3 propeptides span residues 83 to 87, 123 to 134, and 171 to 178; these read SGAPS, ESAEESRNGPMS, and SNKRQEDH.

The protein belongs to the glucagon family.

The protein localises to the secreted. Promotes hydrolysis of glycogen and lipids, and raises the blood sugar level. The protein is Glucagon-1 (gcg1) of Oncorhynchus mykiss (Rainbow trout).